The primary structure comprises 95 residues: Aspartyl/glutamyl-tRNA(Asn/Gln) amidotransferase subunit C (95 aa).

It belongs to the GatC family. As to quaternary structure, heterotrimer of A, B and C subunits.

It catalyses the reaction L-glutamyl-tRNA(Gln) + L-glutamine + ATP + H2O = L-glutaminyl-tRNA(Gln) + L-glutamate + ADP + phosphate + H(+). It carries out the reaction L-aspartyl-tRNA(Asn) + L-glutamine + ATP + H2O = L-asparaginyl-tRNA(Asn) + L-glutamate + ADP + phosphate + 2 H(+). In terms of biological role, allows the formation of correctly charged Asn-tRNA(Asn) or Gln-tRNA(Gln) through the transamidation of misacylated Asp-tRNA(Asn) or Glu-tRNA(Gln) in organisms which lack either or both of asparaginyl-tRNA or glutaminyl-tRNA synthetases. The reaction takes place in the presence of glutamine and ATP through an activated phospho-Asp-tRNA(Asn) or phospho-Glu-tRNA(Gln). This Caldanaerobacter subterraneus subsp. tengcongensis (strain DSM 15242 / JCM 11007 / NBRC 100824 / MB4) (Thermoanaerobacter tengcongensis) protein is Aspartyl/glutamyl-tRNA(Asn/Gln) amidotransferase subunit C.